The primary structure comprises 228 residues: Protein TIFY 10a (228 aa).

Residues 75 to 110 (REQEKRQLTIFYGGKVLVFDDFPAEKAKDLMQMASK) form the Tify domain. A Jas motif is present at residues 164–189 (PQARKASLHRFLEKRKDRLQAKAPYQ). The short motif at 166–173 (ARKASLHR) is the Nuclear localization signal element. A disordered region spans residues 175–228 (LEKRKDRLQAKAPYQGSPSDASPVKKELQESQPWLGLGPQVAAPDLSLRQESSQ).

This sequence belongs to the TIFY/JAZ family. Interacts with COI1A and COI1B in a coronatine-dependent manner. Coronatine is an analog of jasmonoyl isoleucine (JA-Ile). In terms of processing, ubiquitinated. Targeted for degradation by the SCF(COI1) E3 ubiquitin ligase-proteasome pathway during jasmonate signaling.

It is found in the nucleus. Its function is as follows. Repressor of jasmonate responses. This Oryza sativa subsp. japonica (Rice) protein is Protein TIFY 10a.